The chain runs to 296 residues: AUGMIN subunit 2 (296 aa).

Coiled-coil stretches lie at residues 56–83 and 253–285; these read DDLIRVLRELSVVQRKIADLQVELQGRK and AVHKTRRQNNDQNEEEEEEEEEEDGNNNGNRRL. Residues 218 to 296 are disordered; the sequence is AVSLPTTPGG…WPPSVKKSSV (79 aa). Over residues 264-277 the composition is skewed to acidic residues; the sequence is QNEEEEEEEEEEDG.

This sequence belongs to the HAUS2 family. In terms of assembly, part of the augmin complex composed of 8 subunits. The complex acts on microtubules and interacts with gamma-tubulin in spindles and the phragmoplast.

Functionally, contributes to the assembly of the acentrosomal spindle and phragmoplast microtubule arrays as part of the augmin complex. The protein is AUGMIN subunit 2 of Arabidopsis thaliana (Mouse-ear cress).